The primary structure comprises 302 residues: Sulfate adenylyltransferase subunit 2 (302 aa).

Belongs to the PAPS reductase family. CysD subfamily. In terms of assembly, heterodimer composed of CysD, the smaller subunit, and CysN.

It catalyses the reaction sulfate + ATP + H(+) = adenosine 5'-phosphosulfate + diphosphate. Its pathway is sulfur metabolism; hydrogen sulfide biosynthesis; sulfite from sulfate: step 1/3. Its function is as follows. With CysN forms the ATP sulfurylase (ATPS) that catalyzes the adenylation of sulfate producing adenosine 5'-phosphosulfate (APS) and diphosphate, the first enzymatic step in sulfur assimilation pathway. APS synthesis involves the formation of a high-energy phosphoric-sulfuric acid anhydride bond driven by GTP hydrolysis by CysN coupled to ATP hydrolysis by CysD. The chain is Sulfate adenylyltransferase subunit 2 from Salmonella paratyphi A (strain AKU_12601).